Here is a 964-residue protein sequence, read N- to C-terminus: Phosphoenolpyruvate carboxylase (964 aa).

Ser-11 is modified (phosphoserine). Residues His-172 and Lys-600 contribute to the active site.

This sequence belongs to the PEPCase type 1 family. As to quaternary structure, homotetramer. Mg(2+) serves as cofactor.

It is found in the cytoplasm. The catalysed reaction is oxaloacetate + phosphate = phosphoenolpyruvate + hydrogencarbonate. It participates in photosynthesis; C4 acid pathway. By light-reversible phosphorylation. Through the carboxylation of phosphoenolpyruvate (PEP) it forms oxaloacetate, a four-carbon dicarboxylic acid source for the tricarboxylic acid cycle. This Nicotiana tabacum (Common tobacco) protein is Phosphoenolpyruvate carboxylase (PPC).